The primary structure comprises 284 residues: MEMO1 family protein MmarC6_1286 (284 aa).

Belongs to the MEMO1 family.

This Methanococcus maripaludis (strain C6 / ATCC BAA-1332) protein is MEMO1 family protein MmarC6_1286.